Reading from the N-terminus, the 86-residue chain is U13-theraphotoxin-Cg1b (86 aa).

Residues 1–21 (MKVSVLITLAVLGVMFVWASA) form the signal peptide. The propeptide occupies 22-51 (AELEQSGSDQKDSPAWLKSMERIFQSEERE). Disulfide bonds link C52/C66, C59/C71, and C65/C78.

This sequence belongs to the neurotoxin 10 (Hwtx-1) family. 41 (Jztx-36) subfamily. In terms of tissue distribution, expressed by the venom gland.

The protein localises to the secreted. Its function is as follows. Probable ion channel inhibitor. The protein is U13-theraphotoxin-Cg1b of Chilobrachys guangxiensis (Chinese earth tiger tarantula).